The following is a 214-amino-acid chain: 3,4-dihydroxy-2-butanone 4-phosphate synthase (214 aa).

Residues 37-38, Asp-42, 150-154, and Glu-174 contribute to the D-ribulose 5-phosphate site; these read RE and RRGHT. Glu-38 provides a ligand contact to Mg(2+). Residue His-153 participates in Mg(2+) binding.

It belongs to the DHBP synthase family. As to quaternary structure, homodimer. Mg(2+) serves as cofactor. It depends on Mn(2+) as a cofactor.

It catalyses the reaction D-ribulose 5-phosphate = (2S)-2-hydroxy-3-oxobutyl phosphate + formate + H(+). It functions in the pathway cofactor biosynthesis; riboflavin biosynthesis; 2-hydroxy-3-oxobutyl phosphate from D-ribulose 5-phosphate: step 1/1. Its function is as follows. Catalyzes the conversion of D-ribulose 5-phosphate to formate and 3,4-dihydroxy-2-butanone 4-phosphate. The protein is 3,4-dihydroxy-2-butanone 4-phosphate synthase of Nitratidesulfovibrio vulgaris (strain DP4) (Desulfovibrio vulgaris).